We begin with the raw amino-acid sequence, 104 residues long: Iron-sulfur cluster assembly protein CyaY (104 aa).

Belongs to the frataxin family.

Its function is as follows. Involved in iron-sulfur (Fe-S) cluster assembly. May act as a regulator of Fe-S biogenesis. This chain is Iron-sulfur cluster assembly protein CyaY, found in Vibrio campbellii (strain ATCC BAA-1116).